The primary structure comprises 113 residues: uncharacterized protein (113 aa).

2 disordered regions span residues 1 to 22 and 90 to 113; these read MGEH…PLAQ and DGRH…SDDL. Over residues 90 to 99 the composition is skewed to basic and acidic residues; sequence DGRHTTESSF. Over residues 100–113 the composition is skewed to low complexity; the sequence is EHSSPSRSPQSDDL.

This is an uncharacterized protein from Mycobacterium tuberculosis (strain ATCC 25618 / H37Rv).